The following is a 572-amino-acid chain: Putative lysozyme-like protein (572 aa).

The signal sequence occupies residues Met-1–Ala-17. Positions Met-145–Gly-165 are enriched in low complexity. Disordered stretches follow at residues Met-145–Gly-199, Ser-231–Val-297, Ala-326–Lys-388, and Ala-433–Gly-469. Positions Ser-166–Leu-185 are enriched in gly residues. Residues Ser-231–Ser-240 show a composition bias toward low complexity. Gly residues predominate over residues Ser-258 to Leu-282. Positions Ala-326–Gly-358 are enriched in low complexity. Over residues Ser-359 to Leu-382 the composition is skewed to gly residues. A compositionally biased stretch (low complexity) spans Ala-433–Gly-452. Positions Ser-453–Gly-469 are enriched in gly residues.

This sequence belongs to the dictyostelium lysozyme family.

This is Putative lysozyme-like protein (alyL) from Dictyostelium discoideum (Social amoeba).